Reading from the N-terminus, the 269-residue chain is Zinc transporter ZupT (269 aa).

The next 8 membrane-spanning stretches (helical) occupy residues 12–32 (AFSI…LVMF), 41–61 (LSFG…TEIF), 75–95 (DHAF…IALI), 126–146 (MMAA…TFFA), 152–172 (AVGM…GISI), 187–207 (VWAC…GYLV), 211–231 (FLSP…MVFL), and 249–269 (TVYG…LFHF). Fe(2+)-binding residues include Asn-136 and Glu-139. Zn(2+) contacts are provided by Glu-139 and His-164. Residues Asn-165, Glu-168, and Glu-197 each coordinate Fe(2+). Glu-168 lines the Zn(2+) pocket.

Belongs to the ZIP transporter (TC 2.A.5) family. ZupT subfamily.

The protein localises to the cell inner membrane. It carries out the reaction Zn(2+)(in) = Zn(2+)(out). Its function is as follows. Mediates zinc uptake. May also transport other divalent cations. This chain is Zinc transporter ZupT, found in Neisseria meningitidis serogroup B (strain ATCC BAA-335 / MC58).